Consider the following 384-residue polypeptide: Omega-6 fatty acid desaturase, endoplasmic reticulum (384 aa).

A disordered region spans residues 1–23 (MGAGGRMQVSPSPKKSETDTLKR). Residues 14 to 23 (KKSETDTLKR) show a composition bias toward basic and acidic residues. Transmembrane regions (helical) follow at residues 56-76 (LIWD…YFPL) and 84-104 (VAWP…WVIA). Residues 105-109 (HECGH) carry the Histidine box-1 motif. The helical transmembrane segment at 117–137 (WLDDTVGLIFHSFLLVPYFSW) threads the bilayer. Residues 141 to 145 (HRRHH) carry the Histidine box-2 motif. 3 helical membrane-spanning segments follow: residues 180 to 200 (VMLT…NVSG), 226 to 246 (IYVS…YAAA), and 253 to 273 (VCLY…ITYL). The Histidine box-3 signature appears at 316–320 (HVAHH).

It belongs to the fatty acid desaturase type 1 family.

The protein localises to the endoplasmic reticulum membrane. It participates in lipid metabolism; polyunsaturated fatty acid biosynthesis. ER (microsomal) omega-6 fatty acid desaturase introduces the second double bond in the biosynthesis of 18:3 fatty acids, important constituents of plant membranes. It is thought to use cytochrome b5 as an electron donor and to act on fatty acids esterified to phosphatidylcholine and, possibly, other phospholipids. This chain is Omega-6 fatty acid desaturase, endoplasmic reticulum, found in Brassica juncea (Indian mustard).